Reading from the N-terminus, the 589-residue chain is DNA ligase (589 aa).

Residue glutamate 250 participates in ATP binding. The N6-AMP-lysine intermediate role is filled by lysine 252. ATP is bound by residues arginine 257, arginine 272, glutamate 302, phenylalanine 342, arginine 417, and lysine 423.

Belongs to the ATP-dependent DNA ligase family. Mg(2+) is required as a cofactor.

The catalysed reaction is ATP + (deoxyribonucleotide)n-3'-hydroxyl + 5'-phospho-(deoxyribonucleotide)m = (deoxyribonucleotide)n+m + AMP + diphosphate.. DNA ligase that seals nicks in double-stranded DNA during DNA replication, DNA recombination and DNA repair. The polypeptide is DNA ligase (Cenarchaeum symbiosum (strain A)).